The sequence spans 168 residues: Ribosome-binding factor A (168 aa).

Residues 125–138 (RVREGAKHAGDSDP) are compositionally biased toward basic and acidic residues. The disordered stretch occupies residues 125–168 (RVREGAKHAGDSDPYRVLGEGDLEGPATGGPDVEDEGGANSHDR).

It belongs to the RbfA family. As to quaternary structure, monomer. Binds 30S ribosomal subunits, but not 50S ribosomal subunits or 70S ribosomes.

It is found in the cytoplasm. One of several proteins that assist in the late maturation steps of the functional core of the 30S ribosomal subunit. Associates with free 30S ribosomal subunits (but not with 30S subunits that are part of 70S ribosomes or polysomes). Required for efficient processing of 16S rRNA. May interact with the 5'-terminal helix region of 16S rRNA. The polypeptide is Ribosome-binding factor A (Mycolicibacterium gilvum (strain PYR-GCK) (Mycobacterium gilvum (strain PYR-GCK))).